Reading from the N-terminus, the 267-residue chain is Hydroxyethylthiazole kinase (267 aa).

Met-42 provides a ligand contact to substrate. 2 residues coordinate ATP: Cys-118 and Thr-162. Residue Gly-189 coordinates substrate.

This sequence belongs to the Thz kinase family. Mg(2+) serves as cofactor.

The enzyme catalyses 5-(2-hydroxyethyl)-4-methylthiazole + ATP = 4-methyl-5-(2-phosphooxyethyl)-thiazole + ADP + H(+). Its pathway is cofactor biosynthesis; thiamine diphosphate biosynthesis; 4-methyl-5-(2-phosphoethyl)-thiazole from 5-(2-hydroxyethyl)-4-methylthiazole: step 1/1. Its function is as follows. Catalyzes the phosphorylation of the hydroxyl group of 4-methyl-5-beta-hydroxyethylthiazole (THZ). This Rubrobacter xylanophilus (strain DSM 9941 / JCM 11954 / NBRC 16129 / PRD-1) protein is Hydroxyethylthiazole kinase.